The primary structure comprises 713 residues: Bifunctional protein gal10 (713 aa).

Residues 1 to 350 are galactowaldenase; the sequence is MAVQDEYILV…TIENPFGFQI (350 aa). Residue 7-38 participates in NAD(+) binding; the sequence is YILVTGGAGYIGSHTVIELINHGYKVIIVDNL. The tract at residues 351 to 713 is mutarotase; that stretch reads DNYKWKLFNT…SASYNSGEYY (363 aa). The active-site For mutarotase activity is His532.

The protein in the N-terminal section; belongs to the NAD(P)-dependent epimerase/dehydratase family. This sequence in the C-terminal section; belongs to the aldose epimerase family. NAD(+) serves as cofactor.

The enzyme catalyses UDP-alpha-D-glucose = UDP-alpha-D-galactose. It carries out the reaction alpha-D-glucose = beta-D-glucose. The protein operates within carbohydrate metabolism; galactose metabolism. It functions in the pathway carbohydrate metabolism; hexose metabolism. Its function is as follows. Mutarotase converts alpha-aldose to the beta-anomer. It is active on D-glucose, L-arabinose, D-xylose, D-galactose, maltose and lactose. This chain is Bifunctional protein gal10 (gal10), found in Schizosaccharomyces pombe (strain 972 / ATCC 24843) (Fission yeast).